The primary structure comprises 22 residues: Conantokin-Oc (22 aa).

Positions 1–22 (GEEERKAMAELEAKKAQEALKA) are disordered. Residues glutamate 3, glutamate 4, glutamate 10, and glutamate 18 each carry the 4-carboxyglutamate modification.

Expressed by the venom duct.

Its subcellular location is the secreted. Functionally, conantokins inhibit N-methyl-D-aspartate (NMDA) receptors. This is Conantokin-Oc from Conus ochroleucus (Perfect cone).